Here is a 125-residue protein sequence, read N- to C-terminus: MTIPEDLRYTKDHEWMKLLDDGTALVGITDFAQSELGDIVFVELKADGTTLKTHESFGTVEAVKTVADLFAPVAGEIVASNPELASAEVVNQDPYNAWLIKMKVANPAEVEALLDAAAYRQLIGE.

In terms of domain architecture, Lipoyl-binding spans T23 to K103. The residue at position 64 (K64) is an N6-lipoyllysine.

It belongs to the GcvH family. The glycine cleavage system is composed of four proteins: P, T, L and H. (R)-lipoate is required as a cofactor.

Functionally, the glycine cleavage system catalyzes the degradation of glycine. The H protein shuttles the methylamine group of glycine from the P protein to the T protein. This Chlorobium chlorochromatii (strain CaD3) protein is Glycine cleavage system H protein.